Reading from the N-terminus, the 295-residue chain is Inward rectifier potassium channel Kirbac3.1 (295 aa).

The Cytoplasmic segment spans residues 1–47; sequence MTGGMKPPARKPRILNSDGSSNITRLGLEKRGWLDDHYHDLLTVSWP. The helical transmembrane segment at 48–69 threads the bilayer; that stretch reads VFITLITGLYLVTNALFALAYL. At 70 to 82 the chain is on the extracellular side; the sequence is ACGDVIENARPGS. The segment at residues 83–95 is an intramembrane region (helical; Pore-forming); it reads FTDAFFFSVQTMA. Residues 96-100 carry the Selectivity filter motif; sequence TIGYG. The chain crosses the membrane as a helical span at residues 107–131; it reads PLANTLVTLEALCGMLGLAVAASLI. Topologically, residues 132–295 are cytoplasmic; that stretch reads YARFTRPTAG…DLGKFHEIAQ (164 aa).

Belongs to the inward rectifier-type potassium channel (TC 1.A.2.1) family. KCNJ11 subfamily. Homotetramer.

The protein resides in the membrane. Functionally, inward rectifier potassium channel that mediates potassium uptake into the cell. Inward rectifier potassium channels are characterized by a greater tendency to allow potassium to flow into the cell rather than out of it. The inward rectification may be achieved by the blockage of outward current by cytoplasmic divalent metal ions and polyamines. Complements an E.coli mutant that is defective in K(+) uptake. The polypeptide is Inward rectifier potassium channel Kirbac3.1 (Paramagnetospirillum magnetotacticum (Aquaspirillum magnetotacticum)).